The sequence spans 213 residues: Ferric nitrobindin-like protein (213 aa).

The tract at residues Val-17 to Asp-42 is disordered. Residues Gly-65 to Gly-71 carry the GXWXGXG motif.

The protein belongs to the nitrobindin family.

In Corynebacterium jeikeium (strain K411), this protein is Ferric nitrobindin-like protein.